The primary structure comprises 571 residues: Protein dead ringer homolog (571 aa).

Disordered regions lie at residues 45–117 (QHQQ…EPDK) and 190–229 (KRMQQDHNIQQSTNHIPTPSSASSHTSSGSVTSQTNSCNG). Basic and acidic residues predominate over residues 49–77 (RMMEQHKNDDVISNDVRCDDFSDGGERQR). Residues 195 to 206 (DHNIQQSTNHIP) show a composition bias toward polar residues. The span at 207-224 (TPSSASSHTSSGSVTSQT) shows a compositional bias: low complexity. The 93-residue stretch at 249-341 (DIKRKEFLDD…YLYPFECERE (93 aa)) folds into the ARID domain. The segment covering 459-471 (AAHHAAQQAAQHQ) has biased composition (low complexity). Residues 459-528 (AAHHAAQQAA…GDRGRHNEMS (70 aa)) form a disordered region. Residues 473–558 (SLKKEIDSDY…GVLFAHSPNH (86 aa)) enclose the REKLES domain. 2 stretches are compositionally biased toward basic and acidic residues: residues 487 to 507 (PPEKKLSFDDSVRRLTPDNQR) and 518 to 527 (MGDRGRHNEM).

The protein resides in the nucleus. Transcription factor. The protein is Protein dead ringer homolog (Ci-DRIL1/2) of Ciona intestinalis (Transparent sea squirt).